Here is a 784-residue protein sequence, read N- to C-terminus: DNA repair and recombination protein RAD54-like (784 aa).

Residues 2 to 9 (RRSLAPSQ) form a required for chromatin remodeling, strand pairing activities and coupling of ATPase activity region. Residue Thr22 is modified to Phosphothreonine. The region spanning 169-344 (EGKKGNFNGC…FSLVNFVNPE (176 aa)) is the Helicase ATP-binding domain. 182 to 189 (DEMGLGKT) lines the ATP pocket. The short motif at 295–298 (DEGH) is the DEGH box element. Residues 501 to 658 (LLDFMLATIR…NNESAEKHFT (158 aa)) enclose the Helicase C-terminal domain. Positions 742 to 784 (QAIKESEETKQEAEDTSIPAKSKRKRSTTPESDDCNDEDFKGF) are disordered. Residues 745–754 (KESEETKQEA) show a composition bias toward basic and acidic residues.

It belongs to the SNF2/RAD54 helicase family. In terms of assembly, interacts (via N-terminus) with spn-A/Rad51.

The protein localises to the nucleus. In terms of biological role, involved in mitotic DNA repair and meiotic recombination. Functions in the recombinational DNA repair pathway. Essential for interhomolog gene conversion (GC), but may have a less important role in intersister GC than spn-A/Rad51. In the presence of DNA, spn-A/Rad51 enhances the ATPase activity of okr/Rad54. This is DNA repair and recombination protein RAD54-like from Drosophila willistoni (Fruit fly).